We begin with the raw amino-acid sequence, 237 residues long: Orotidine 5'-phosphate decarboxylase (237 aa).

Substrate is bound by residues D17, K39, 66-75, T121, R182, Q191, G211, and R212; that span reads DLKLHDIGNT. The active-site Proton donor is the K68.

Belongs to the OMP decarboxylase family. Type 1 subfamily. As to quaternary structure, homodimer.

The catalysed reaction is orotidine 5'-phosphate + H(+) = UMP + CO2. It functions in the pathway pyrimidine metabolism; UMP biosynthesis via de novo pathway; UMP from orotate: step 2/2. In terms of biological role, catalyzes the decarboxylation of orotidine 5'-monophosphate (OMP) to uridine 5'-monophosphate (UMP). This is Orotidine 5'-phosphate decarboxylase from Rhodopseudomonas palustris (strain TIE-1).